The sequence spans 430 residues: Argininosuccinate lyase (430 aa).

This sequence belongs to the lyase 1 family. Argininosuccinate lyase subfamily.

It is found in the cytoplasm. The catalysed reaction is 2-(N(omega)-L-arginino)succinate = fumarate + L-arginine. Its pathway is amino-acid biosynthesis; L-arginine biosynthesis; L-arginine from L-ornithine and carbamoyl phosphate: step 3/3. This Sorangium cellulosum (strain So ce56) (Polyangium cellulosum (strain So ce56)) protein is Argininosuccinate lyase.